A 104-amino-acid polypeptide reads, in one-letter code: L-rhamnose mutarotase (104 aa).

Tyr-18 serves as a coordination point for substrate. His-22 (proton donor) is an active-site residue. Residues Tyr-41 and 76–77 contribute to the substrate site; that span reads WW.

It belongs to the rhamnose mutarotase family. Homodimer.

The protein resides in the cytoplasm. The enzyme catalyses alpha-L-rhamnose = beta-L-rhamnose. It participates in carbohydrate metabolism; L-rhamnose metabolism. Functionally, involved in the anomeric conversion of L-rhamnose. The sequence is that of L-rhamnose mutarotase from Escherichia coli (strain K12 / MC4100 / BW2952).